A 310-amino-acid polypeptide reads, in one-letter code: Protein YIP5 (310 aa).

The segment at 1 to 84 (MPSNNSSFLD…VIGQNDNDGL (84 aa)) is disordered. The segment covering 10 to 22 (DIDDDLEGVDDFG) has biased composition (acidic residues). Positions 35 to 57 (DSPNMNNSTAGKGSEFYNTTGSK) are enriched in polar residues. S60 carries the phosphoserine modification. The next 5 helical transmembrane spans lie at 131 to 151 (TDLY…FTMS), 181 to 201 (LHSI…TMQV), 220 to 240 (LISV…ILNI), 249 to 269 (TVQA…SYFL), and 290 to 310 (SIIV…FIIF).

It belongs to the YIP1 family. In terms of assembly, interacts with SNX3, TVP18, TVP23, YIP1 and YIP4. Interacts with SEC4; The C-terminal cysteines in the Rab GTPase SEC4 are essential for the interaction. Interacts with YPT1, YPT6, YPT7, YPT10, YPT11, YPT31, YPT32 and YPT52; These proteins are all Rab GTPases.

It localises to the membrane. Functionally, possible role in vesicle-mediated transport. May be involved in proper membrane localization of Rab GTPases. The chain is Protein YIP5 (YIP5) from Saccharomyces cerevisiae (strain ATCC 204508 / S288c) (Baker's yeast).